Reading from the N-terminus, the 382-residue chain is Protein-arginine rhamnosyltransferase (382 aa).

18 to 19 serves as a coordination point for dTDP; sequence FG. Residue aspartate 20 is the Proton acceptor of the active site. Residues aspartate 20, tyrosine 187, 250–252, and 268–272 each bind dTDP-beta-L-rhamnose; these read VPQ and RGEDS. Residues tyrosine 187, 250 to 252, and 268 to 272 each bind dTDP; these read VPQ and RGEDS. Residue glutamate 270 is part of the active site.

This sequence belongs to the glycosyltransferase 104 family.

The catalysed reaction is dTDP-beta-L-rhamnose + L-arginyl-[protein] = N(omega)-(alpha-L-rhamnosyl)-L-arginyl-[protein] + dTDP + H(+). Its function is as follows. Protein-arginine rhamnosyltransferase that catalyzes the transfer of a single rhamnose to elongation factor P (EF-P) on 'Lys-32', a modification required for EF-P-dependent rescue of polyproline stalled ribosomes. This is Protein-arginine rhamnosyltransferase from Neisseria meningitidis serogroup B / serotype 15 (strain H44/76).